The following is a 451-amino-acid chain: Magnesium transporter MgtE (451 aa).

Residues 1 to 285 (MVQNMTYDEL…TKAYVAAYRR (285 aa)) are Cytoplasmic-facing. Aspartate 64 and aspartate 96 together coordinate Mg(2+). 2 consecutive CBS domains span residues 140–203 (MTNR…VQDL) and 204–260 (MFTR…EADE). The Mg(2+) site is built by glutamate 218, aspartate 228, aspartate 249, aspartate 252, glutamate 257, glutamate 260, and aspartate 261. Residues 286–306 (LPWLILLLFIGLISGSIISYF) form a helical membrane-spanning segment. At 307–311 (EDALK) the chain is on the extracellular side. The chain crosses the membrane as a helical span at residues 312 to 332 (QVVALAFFMPMVSGMTGNTGT). The Cytoplasmic portion of the chain corresponds to 333–371 (QSLAVVIRGLSKEEMNKKTIVRLIFREFRTSIFIGAVCS). 2 consecutive transmembrane segments (helical) span residues 372-392 (VLIA…FVVA) and 393-413 (SSLF…PIIL). The Cytoplasmic portion of the chain corresponds to 414–427 (HKLKVDPAIASGPL). Aspartate 419 and aspartate 433 together coordinate Mg(2+). The helical transmembrane segment at 428 to 448 (ITTLNDILSLLIYFGIATAFI) threads the bilayer. Residues 449–451 (HSL) lie on the Extracellular side of the membrane.

Belongs to the SLC41A transporter family. Homodimer.

The protein resides in the cell membrane. It catalyses the reaction Mg(2+)(in) = Mg(2+)(out). Its activity is regulated as follows. Binds cyclic di-AMP (c-di-AMP), which may regulate the transporter activity. Its function is as follows. Acts as a magnesium transporter. MgtE is the dominant transporter under rich-medium growth conditions, and it may provide the primary route of magnesium import in B.subtilis, while the other putative transport proteins are likely to be utilized for more-specialized growth conditions. This is Magnesium transporter MgtE from Bacillus subtilis (strain 168).